The following is a 580-amino-acid chain: MSQDNATGAAAASTSNFLRQIIDTDLEQGTYAGRQDTAGHALPPIITRFPPEPNGYLHIGHAKSIWVNFGLAKEYGGRCHLRFDDTNPVKEDTEYVDSIIDAVHWLGYSWQNGTGEHLYYASDYFEQLYGFAEVLIQRGAAYIDSQSAEQIAANRGDFTRPGTPSPFRDRSVEENLALFRDMRAGKYQDGQHVLRARIDMAAPNIVMRDPVLYRIRHAHHHRTGDAWCIYPMYDFTHCISDALENITHSLCTLEFENNRPLYDWVLDHLRDAGALPAPLPHQYEFARLHLTYAITSKRKLLQLVNEKRVDGWDDPRMPTLVGIRRRGYTPESIQLFCERVGVSKADSWIDMSILEAAVRDDLDARAPRSVAVLDPVKLILDNVPADFNEPCSAPVHPKQPELGRREFPLTRELWIEREDFTETPPKGYFRLFPGNKVRLRYGYVIECTGCDKDADGNITAVHANIIPDTKSGTPGADSVKVKGNIHWVSAAHALEAEVRLYDRLFTDPQPDSGDKNFLDALNPDAKRVVTAYLEPTLATAKPEDRFQFERHGYFVADRIDSQPGKPVFNRVVGLKDSWGK.

The 'HIGH' region signature appears at Pro-51–His-61. ATP-binding positions include Glu-52–Asn-54 and His-58–Ser-64. L-glutamine-binding residues include Asp-84 and Tyr-233. Residues Thr-252 and Arg-287–Leu-288 each bind ATP. Residues Ile-294–Arg-298 carry the 'KMSKS' region motif.

This sequence belongs to the class-I aminoacyl-tRNA synthetase family. In terms of assembly, monomer.

The protein resides in the cytoplasm. The catalysed reaction is tRNA(Gln) + L-glutamine + ATP = L-glutaminyl-tRNA(Gln) + AMP + diphosphate. This chain is Glutamine--tRNA ligase, found in Ralstonia nicotianae (strain ATCC BAA-1114 / GMI1000) (Ralstonia solanacearum).